The following is a 977-amino-acid chain: Aspartate, glycine, lysine and serine-rich protein (977 aa).

The tract at residues 23 to 116 (GVLPDVDSGF…PITNLGSSTS (94 aa)) is disordered. The segment covering 37–50 (EETKSEPKQPDTKP) has biased composition (basic and acidic residues). A compositionally biased stretch (polar residues) spans 51–63 (EQPSVSKPDSSVN). Asparagine 136 carries an N-linked (GlcNAc...) asparagine glycan. Disordered regions lie at residues 246 to 767 (AGGG…TSRG) and 780 to 922 (GGGK…GSGL). Low complexity predominate over residues 251–278 (YYSDSSDSSDSDSSGSDSSESGSSESGS). A compositionally biased stretch (polar residues) spans 309–325 (NGSPDNGTPGSGSSRYT). Positions 410-427 (LEDELLGSDSSDEDDIDD) are enriched in acidic residues. The segment covering 428 to 443 (GLGGLGLGAGPGGPGG) has biased composition (gly residues). Basic residues-rich tracts occupy residues 447-457 (TPKHKPRTDKK) and 465-540 (KRKP…VQRK). The span at 541–557 (QPREYKQESPEVEREHS) shows a compositional bias: basic and acidic residues. Residues 572–583 (KILITSLTSSRG) show a composition bias toward low complexity. Positions 591-643 (DGSGSGNGGGDDGNGGGAGNGGGAGNGGGAGNGGGAGNGGGNGGGGNGGGGND) are enriched in gly residues. A compositionally biased stretch (basic and acidic residues) spans 660–675 (EHRNRCEDDDDYREKC). Residues 700–724 (SGSSSSSSATESESSSTSTTPSTSS) are compositionally biased toward low complexity. Polar residues-rich tracts occupy residues 730-744 (ILST…TRSG), 758-767 (SRPSVATSRG), and 785-801 (STGT…TSSA). 3 stretches are compositionally biased toward low complexity: residues 803 to 814 (GLDLSGLLGQLG), 822 to 857 (GPKP…GLLG), and 870 to 907 (KKPT…KLSP).

Component of the acid-insoluble and acid-soluble organic matrix of calcified layers of the shell (at protein level).

Its subcellular location is the secreted. This Lottia gigantea (Giant owl limpet) protein is Aspartate, glycine, lysine and serine-rich protein.